Here is an 82-residue protein sequence, read N- to C-terminus: Putative membrane protein insertion efficiency factor (82 aa).

This sequence belongs to the UPF0161 family.

It localises to the cell inner membrane. Could be involved in insertion of integral membrane proteins into the membrane. In Aeromonas salmonicida (strain A449), this protein is Putative membrane protein insertion efficiency factor.